Reading from the N-terminus, the 211-residue chain is Small ribosomal subunit protein uS3 (211 aa).

Residues isoleucine 16–glutamate 85 enclose the KH type-2 domain.

The protein belongs to the universal ribosomal protein uS3 family. As to quaternary structure, part of the 30S ribosomal subunit.

Binds the lower part of the 30S subunit head. The protein is Small ribosomal subunit protein uS3 of Methanococcus maripaludis (strain DSM 14266 / JCM 13030 / NBRC 101832 / S2 / LL).